Reading from the N-terminus, the 526-residue chain is Zinc finger protein Helios (526 aa).

The interval 28-94 (DLTSSTPNGQ…IESSEVADNR (67 aa)) is disordered. Over residues 29–50 (LTSSTPNGQHASPSHMTSTNSV) the composition is skewed to polar residues. S56 carries the post-translational modification Phosphoserine. A compositionally biased stretch (basic and acidic residues) spans 61–77 (DRQPLSREDEIRGHDEG). 2 positions are modified to phosphoserine: S78 and S79. Residue K95 forms a Glycyl lysine isopeptide (Lys-Gly) (interchain with G-Cter in SUMO2) linkage. C2H2-type zinc fingers lie at residues 112–134 (LKCD…KRSH), 140–162 (FHCN…IKLH), 168–190 (FKCP…LRTH), and 196–219 (HKCN…ERCH). Residue K288 is modified to N6-acetyllysine. Basic and acidic residues predominate over residues 368–379 (ISRETSDSHENN). Positions 368 to 435 (ISRETSDSHE…LNPKRKQSPA (68 aa)) are disordered. Glycyl lysine isopeptide (Lys-Gly) (interchain with G-Cter in SUMO2) cross-links involve residues K442 and K448. C2H2-type zinc fingers lie at residues 471 to 493 (FKCE…MGCH) and 499 to 523 (LECN…RGEH).

The protein belongs to the Ikaros C2H2-type zinc-finger protein family. As to quaternary structure, can form homodimers. Interacts with IKZF4 and IKZF5. In terms of tissue distribution, expressed in outer hair cells (OHC) of the organ of Corti. Abundant in thymus, low expression in bone marrow and brain and no detectable expression in spleen, liver, kidney or muscle. Expressed in T-cells.

The protein localises to the nucleus. In terms of biological role, transcriptional regulator required for outer hair cells (OHC) maturation and, consequently, for hearing. This chain is Zinc finger protein Helios (Ikzf2), found in Mus musculus (Mouse).